The chain runs to 118 residues: UPF0295 protein BC_0520 (118 aa).

2 helical membrane-spanning segments follow: residues 12–32 (IRTFALSLVFIGLFIAYLGVF) and 43–63 (FMMVGFLAVIASTVVYFWIGM).

It belongs to the UPF0295 family.

The protein resides in the cell membrane. The sequence is that of UPF0295 protein BC_0520 from Bacillus cereus (strain ATCC 14579 / DSM 31 / CCUG 7414 / JCM 2152 / NBRC 15305 / NCIMB 9373 / NCTC 2599 / NRRL B-3711).